The chain runs to 879 residues: Alanine--tRNA ligase (879 aa).

Zn(2+) contacts are provided by histidine 566, histidine 570, cysteine 668, and histidine 672.

Belongs to the class-II aminoacyl-tRNA synthetase family. The cofactor is Zn(2+).

It localises to the cytoplasm. The catalysed reaction is tRNA(Ala) + L-alanine + ATP = L-alanyl-tRNA(Ala) + AMP + diphosphate. Functionally, catalyzes the attachment of alanine to tRNA(Ala) in a two-step reaction: alanine is first activated by ATP to form Ala-AMP and then transferred to the acceptor end of tRNA(Ala). Also edits incorrectly charged Ser-tRNA(Ala) and Gly-tRNA(Ala) via its editing domain. The protein is Alanine--tRNA ligase of Clostridium botulinum (strain Hall / ATCC 3502 / NCTC 13319 / Type A).